The chain runs to 1290 residues: Alpha-factor-transporting ATPase (1290 aa).

Residues 1 to 25 (MNFLSFKTTKHYHIFRYVNIRNDYR) are Cytoplasmic-facing. The chain crosses the membrane as a helical span at residues 26–46 (LLMIMIIGTVATGLVPAITSI). In terms of domain architecture, ABC transmembrane type-1 1 spans 27-319 (LMIMIIGTVA…TLHQIVVLQK (293 aa)). The Extracellular portion of the chain corresponds to 47–75 (LTGRVFDLLSVFVANGSHQGLYSQLVQRS). N-linked (GlcNAc...) asparagine glycosylation occurs at Asn-61. A helical transmembrane segment spans residues 76-96 (MAVMALGAASVPVMWLSLTSW). The Cytoplasmic portion of the chain corresponds to 97–150 (MHIGERQGFRIRSQILEAYLEEKPMEWYDNNEKLLGDFTQINRCVEELRSSSAE). Residues 151-171 (ASAITFQNLVAICALLGTSFY) form a helical membrane-spanning segment. Residues 172 to 173 (YS) are Extracellular-facing. The chain crosses the membrane as a helical span at residues 174–194 (WSLTLIILCSSPIITFFAVVF). The Cytoplasmic segment spans residues 195–262 (SRMIHVYSEK…SCFFVAANAG (68 aa)). Residues 263–283 (ILRFLTLTMFVQGFWFGSAMI) traverse the membrane as a helical segment. Topologically, residues 284-296 (KKGKLNINDVITC) are extracellular. A helical membrane pass occupies residues 297–317 (FHSCIMLGSTLNNTLHQIVVL). Residues 318 to 715 (QKGGVAMEKI…RMIKSIRYKK (398 aa)) lie on the Cytoplasmic side of the membrane. An ABC transporter 1 domain is found at 357–603 (LTFANVSFSY…PTTTFSTWYH (247 aa)). 392–399 (GKSGSGKS) contacts ATP. A helical membrane pass occupies residues 716-736 (ILILGLLCSLIAGATNPVFSY). The region spanning 717-1007 (LILGLLCSLI…LVSQIPDISR (291 aa)) is the ABC transmembrane type-1 2 domain. Residues 737–763 (TFSFLLEGIVPSTDGKTGSSHYLAKWS) lie on the Extracellular side of the membrane. A helical membrane pass occupies residues 764–784 (LLVLGVAAADGIFNFAKGFLL). Topologically, residues 785–838 (DCCSEYWVMDLRNEVMEKLTRKNMDWFSGENNKASEISALVLNDLRDLRSLVSE) are cytoplasmic. The helical transmembrane segment at 839–859 (FLSAMTSFVTVSTIGLIWALV) threads the bilayer. At 860 to 865 (SGWKLS) the chain is on the extracellular side. The helical transmembrane segment at 866 to 886 (LVCISMFPLIIIFSAIYGGIL) threads the bilayer. Topologically, residues 887 to 945 (QKCETDYKTSVAQLENCLYQIVTNIKTIKCLQAEFHFQLTYHDLKIKMQQIASKRAIAT) are cytoplasmic. Residues 946–966 (GFGISMTNMIVMCIQAIIYYY) form a helical membrane-spanning segment. At 967-981 (GLKLVMIHEYTSKEM) the chain is on the extracellular side. A helical membrane pass occupies residues 982-1002 (FTTFTLLLFTIMSCTSLVSQI). Topologically, residues 1003–1290 (PDISRGQRAA…LFQIVSNQSS (288 aa)) are cytoplasmic. Lys-1022 is covalently cross-linked (Glycyl lysine isopeptide (Lys-Gly) (interchain with G-Cter in ubiquitin)). The ABC transporter 2 domain maps to 1052-1287 (VSIQNLTFAY…RGELFQIVSN (236 aa)). Residue 1087–1094 (GESGTGKS) participates in ATP binding.

Belongs to the ABC transporter superfamily. Alpha-factor sex pheromone exporter (TC 3.A.1.206) family. In terms of processing, degraded via the ubiquitin system.

The protein resides in the membrane. It catalyses the reaction an [alpha-factor](in) + ATP + H2O = an [alpha-factor](out) + ADP + phosphate + H(+). Its function is as follows. STE6 is required in yeast MATA cells for production of A-factor pheromone. STE6 is involved in the transport of the farnesyl-derivation of the A-factor pheromone. The polypeptide is Alpha-factor-transporting ATPase (STE6) (Saccharomyces cerevisiae (strain ATCC 204508 / S288c) (Baker's yeast)).